A 364-amino-acid chain; its full sequence is Aminomethyltransferase (364 aa).

This sequence belongs to the GcvT family. The glycine cleavage system is composed of four proteins: P, T, L and H.

The enzyme catalyses N(6)-[(R)-S(8)-aminomethyldihydrolipoyl]-L-lysyl-[protein] + (6S)-5,6,7,8-tetrahydrofolate = N(6)-[(R)-dihydrolipoyl]-L-lysyl-[protein] + (6R)-5,10-methylene-5,6,7,8-tetrahydrofolate + NH4(+). Functionally, the glycine cleavage system catalyzes the degradation of glycine. The polypeptide is Aminomethyltransferase (Shigella dysenteriae serotype 1 (strain Sd197)).